The following is a 184-amino-acid chain: Ribosome-recycling factor (184 aa).

Belongs to the RRF family.

The protein resides in the cytoplasm. In terms of biological role, responsible for the release of ribosomes from messenger RNA at the termination of protein biosynthesis. May increase the efficiency of translation by recycling ribosomes from one round of translation to another. This is Ribosome-recycling factor from Agathobacter rectalis (strain ATCC 33656 / DSM 3377 / JCM 17463 / KCTC 5835 / VPI 0990) (Eubacterium rectale).